Consider the following 325-residue polypeptide: Glutarate 2-hydroxylase (325 aa).

Fe cation contacts are provided by His-160, Asp-162, and His-292.

It belongs to the glutarate hydroxylase family. Homotetramer. The cofactor is Fe(2+).

It catalyses the reaction glutarate + 2-oxoglutarate + O2 = (S)-2-hydroxyglutarate + succinate + CO2. It functions in the pathway amino-acid degradation. Acts as an alpha-ketoglutarate-dependent dioxygenase catalyzing hydroxylation of glutarate (GA) to L-2-hydroxyglutarate (L2HG). Functions in a L-lysine degradation pathway that proceeds via cadaverine, glutarate and L-2-hydroxyglutarate. In Escherichia coli O6:K15:H31 (strain 536 / UPEC), this protein is Glutarate 2-hydroxylase.